Here is a 130-residue protein sequence, read N- to C-terminus: Small ribosomal subunit protein uS8 (130 aa).

The protein belongs to the universal ribosomal protein uS8 family. As to quaternary structure, part of the 30S ribosomal subunit. Contacts proteins S5 and S12.

Its function is as follows. One of the primary rRNA binding proteins, it binds directly to 16S rRNA central domain where it helps coordinate assembly of the platform of the 30S subunit. This Photobacterium profundum (strain SS9) protein is Small ribosomal subunit protein uS8.